A 389-amino-acid chain; its full sequence is 23S rRNA (uracil(747)-C(5))-methyltransferase RlmC (389 aa).

Cys-12, Cys-20, Cys-23, and Cys-99 together coordinate [4Fe-4S] cluster. Residues Gln-224, Phe-253, Glu-274, and Asn-321 each coordinate S-adenosyl-L-methionine. The Nucleophile role is filled by Cys-348.

The protein belongs to the class I-like SAM-binding methyltransferase superfamily. RNA M5U methyltransferase family. RlmC subfamily.

It catalyses the reaction uridine(747) in 23S rRNA + S-adenosyl-L-methionine = 5-methyluridine(747) in 23S rRNA + S-adenosyl-L-homocysteine + H(+). Functionally, catalyzes the formation of 5-methyl-uridine at position 747 (m5U747) in 23S rRNA. This Shewanella putrefaciens (strain CN-32 / ATCC BAA-453) protein is 23S rRNA (uracil(747)-C(5))-methyltransferase RlmC.